The sequence spans 164 residues: UPF0304 protein CKO_00501 (164 aa).

It belongs to the UPF0304 family.

The polypeptide is UPF0304 protein CKO_00501 (Citrobacter koseri (strain ATCC BAA-895 / CDC 4225-83 / SGSC4696)).